The primary structure comprises 52 residues: Conotoxin Ac4.3a (52 aa).

A propeptide spanning residues 1–11 (SDFRNAAVHER) is cleaved from the precursor. Gln-12 bears the Pyrrolidone carboxylic acid mark. At Glu-14 the chain carries 4-carboxyglutamate. Thr-18 and Thr-20 each carry an O-linked (HexNAc...) threonine glycan. Pro-28, Pro-33, and Pro-47 each carry 4-hydroxyproline. The residue at position 47 (Pro-47) is a Proline amide. Positions 48–52 (GRRND) are excised as a propeptide.

The protein belongs to the conotoxin A superfamily. Post-translationally, contains 3 disulfide bonds. In terms of tissue distribution, expressed by the venom duct.

It localises to the secreted. Probable neurotoxin with ion channel inhibitor activity. This chain is Conotoxin Ac4.3a, found in Conus achatinus (Little frog cone).